The following is a 70-amino-acid chain: ATP synthase subunit c (70 aa).

The next 2 helical transmembrane spans lie at 4 to 24 and 45 to 65; these read IAAAIAIGLSALGAGIGNGLI and IMFIGVGLVEALPIIGVVIAF.

Belongs to the ATPase C chain family. In terms of assembly, F-type ATPases have 2 components, F(1) - the catalytic core - and F(0) - the membrane proton channel. F(1) has five subunits: alpha(3), beta(3), gamma(1), delta(1), epsilon(1). F(0) has three main subunits: a(1), b(2) and c(10-14). The alpha and beta chains form an alternating ring which encloses part of the gamma chain. F(1) is attached to F(0) by a central stalk formed by the gamma and epsilon chains, while a peripheral stalk is formed by the delta and b chains.

It is found in the cell membrane. F(1)F(0) ATP synthase produces ATP from ADP in the presence of a proton or sodium gradient. F-type ATPases consist of two structural domains, F(1) containing the extramembraneous catalytic core and F(0) containing the membrane proton channel, linked together by a central stalk and a peripheral stalk. During catalysis, ATP synthesis in the catalytic domain of F(1) is coupled via a rotary mechanism of the central stalk subunits to proton translocation. In terms of biological role, key component of the F(0) channel; it plays a direct role in translocation across the membrane. A homomeric c-ring of between 10-14 subunits forms the central stalk rotor element with the F(1) delta and epsilon subunits. The polypeptide is ATP synthase subunit c (Staphylococcus aureus (strain Mu3 / ATCC 700698)).